The primary structure comprises 893 residues: DNA gyrase subunit A (893 aa).

A Topo IIA-type catalytic domain is found at 35 to 501 (LPDVRDGLKP…GLEDLEDEDL (467 aa)). The O-(5'-phospho-DNA)-tyrosine intermediate role is filled by Tyr123. Positions 528 to 534 (QNRGGRG) match the GyrA-box motif. The disordered stretch occupies residues 810–893 (VNEEDDNEEN…ASDNEEDSDE (84 aa)). Acidic residues-rich tracts occupy residues 812 to 821 (EEDDNEENAD) and 852 to 862 (DAEMESVESPE). Over residues 863 to 879 (NDDRIDIRQDFMDRVNE) the composition is skewed to basic and acidic residues. Acidic residues predominate over residues 880–893 (DIESASDNEEDSDE).

The protein belongs to the type II topoisomerase GyrA/ParC subunit family. In terms of assembly, heterotetramer, composed of two GyrA and two GyrB chains. In the heterotetramer, GyrA contains the active site tyrosine that forms a transient covalent intermediate with DNA, while GyrB binds cofactors and catalyzes ATP hydrolysis.

Its subcellular location is the cytoplasm. The enzyme catalyses ATP-dependent breakage, passage and rejoining of double-stranded DNA.. Functionally, a type II topoisomerase that negatively supercoils closed circular double-stranded (ds) DNA in an ATP-dependent manner to modulate DNA topology and maintain chromosomes in an underwound state. Negative supercoiling favors strand separation, and DNA replication, transcription, recombination and repair, all of which involve strand separation. Also able to catalyze the interconversion of other topological isomers of dsDNA rings, including catenanes and knotted rings. Type II topoisomerases break and join 2 DNA strands simultaneously in an ATP-dependent manner. The sequence is that of DNA gyrase subunit A from Staphylococcus epidermidis (strain ATCC 12228 / FDA PCI 1200).